Reading from the N-terminus, the 98-residue chain is N(2)-fixation sustaining protein CowN (98 aa).

This sequence belongs to the CowN family.

Its function is as follows. Is required to sustain N(2)-dependent growth in the presence of low levels of carbon monoxide (CO). Probably acts by protecting the N(2) fixation ability of the nitrogenase complex, which is inactivated in the presence of CO. In Trichlorobacter lovleyi (strain ATCC BAA-1151 / DSM 17278 / SZ) (Geobacter lovleyi), this protein is N(2)-fixation sustaining protein CowN.